The sequence spans 254 residues: DNA repair protein RecO (254 aa).

Belongs to the RecO family.

Involved in DNA repair and RecF pathway recombination. The protein is DNA repair protein RecO of Rhodopseudomonas palustris (strain BisB18).